Reading from the N-terminus, the 882-residue chain is MKKQIGDRYEPKDVENKWISLWEKKKSFAPNSNARESFSIVIPPPNVTGSLHIGHALNHTIQDILVRIERKKGKSTLWLPGMDHAGIATQMVVERELAKESKKRTDFTREEFIHKVWEWKNHSGGMITKQQKLLGESVDWSRERFTLDEGLSKAVFKVFKSLYDEGLIYRGERIINWCPASQTAISDLEVEFRETKGKLYHIKYPIHGKKDQFLVVATTRPETMLGDVAVCANPEDERYTSLKDVVLDLPLTNRQIPLLFDSFVDKEFGSGLVKITPAHDANDFEAGQRLGLKPLLVMNPNGTMNENAGIYQGLDRFEARKKVLADLEAKGLIEKIEDHIHAVGHNSRGGAVIEPYLSTQWFVKIKPLADLAVQAVQSGQVEFIPKMWEKTFFEWMNNIRDWCISRQLWWGHRIPAYHCKKCKHFEVSETAVTVCTSCGSQEVEPDPDVLDTWFSSQLWPFSTLGWPDQTEDLKRYYPTSVLVTGFDIIFFWVSRMIMMGMKFMQAPPFHKVLIHGLVRDKDGKKFSKSVGNVIDPLVMMDKYGTDSFRFFLAATLPEGKDILFDESRLDGYRSFCNKIWNSSRFILMNLEESFVPIGITPDIEKDLEPMDQWILSRFNHCLEEYNKAHSKFHFYEMAAAIYEFIWGDFCDWYIELVKPRAYGKVSPRSAEVAKQVLSDVLIRALGLLHPFMPFLTEEVHSVFSDQYIVTTPFPESYPVASDSLGVQKLNLLQEIVTKIRVMRSENGVAPDKKCKVIVKSSDNLSSSTILENEVSLLQLARLESIRIDTLYEIQKTDSVSHFTKGEIVLPLEGLIDVAKEKARLEKELQKSELEKEKLEIKLSNPGFLSKAAPEVVEKERDKLKTLIDKVEVLKKGIQNLAG.

Positions 45 to 55 (PNVTGSLHIGH) match the 'HIGH' region motif. The short motif at 525-529 (KFSKS) is the 'KMSKS' region element. Lys528 serves as a coordination point for ATP. A coiled-coil region spans residues 812–881 (EGLIDVAKEK…VLKKGIQNLA (70 aa)).

Belongs to the class-I aminoacyl-tRNA synthetase family. ValS type 1 subfamily. In terms of assembly, monomer.

It localises to the cytoplasm. The catalysed reaction is tRNA(Val) + L-valine + ATP = L-valyl-tRNA(Val) + AMP + diphosphate. Catalyzes the attachment of valine to tRNA(Val). As ValRS can inadvertently accommodate and process structurally similar amino acids such as threonine, to avoid such errors, it has a 'posttransfer' editing activity that hydrolyzes mischarged Thr-tRNA(Val) in a tRNA-dependent manner. In Leptospira interrogans serogroup Icterohaemorrhagiae serovar copenhageni (strain Fiocruz L1-130), this protein is Valine--tRNA ligase.